A 378-amino-acid polypeptide reads, in one-letter code: MPVQPCSLPAGFLPAAVSLPSQQTVIAEDETGKATIYHDAPLPIPEPHMVLVKTIAVSINPCDWKMPSRFPAPGARIGCDFAGIVLSIGPEAARIRRDLRIGDRVCGGIHGSNPIDLPSGSFSQYVAAHADLLLKLPNKLSFAQGAVLGGSVFATLWIALYESLGLEGTPDMPLQDDPPPVLVYGGSTSTGTAALQILRLSGYRPIATCSPHNNDLVRAAGAEKVFDYRSETCAADIKSYTNGRLRHVLDIITDLQSQLICYDTFSRVGGKYTCLEQPAEELHLRRTVRKEMIVGLAASGKEIALADGYERTANPQLRARSGEFFQTIQRLVDEGKFVPHPTRTVEGGFEGILKCLDILKSGGTSGEKLVVFVDRENP.

62 to 65 (CDWK) contacts NADP(+). 151–158 (SVFATLWI) lines the substrate pocket. NADP(+) is bound by residues 187–190 (STST), 210–213 (SPHN), Tyr228, and 275–276 (LE). A substrate-binding site is contributed by 295 to 299 (GLAAS). Residue 364 to 365 (TS) coordinates NADP(+).

It belongs to the zinc-containing alcohol dehydrogenase family. In terms of assembly, monomer.

The protein operates within secondary metabolite biosynthesis. In terms of biological role, trans-enoyl reductase; part of the gene cluster that mediates the biosynthesis of oxaleimides, cytotoxic compounds containing an unusual disubstituted succinimide moiety. The first step of the pathway is provided by the HR-PKS poxF that serves in a new mode of collaborative biosynthesis with the PKS-NRPS poxE, by providing the olefin containing amino acid substrate via the synthesis of an ACP-bound dec-4-enoate. The cytochrome P450 monooxygenase poxM-catalyzed oxidation at the alpha-position creates the enzyme-bound 2-hydroxydec-4-enoyl-ACP thioester, which may be prone to spontaneous hydrolysis to yield 2-hydroxydec-4-enoic acid due to increased electrophilicity of the carbonyl. 2-hydroxydec-4-enoic acid can then be further oxidized by poxM to yield the alpha-ketoacid 2-oxodec-4-enoicacid, which is reductively aminated by the aminotransferase poxL to yield (S,E)-2-aminodec-4-enoic acid. The Hybrid PKS-NRPS synthetase poxE then performs condensation between the octaketide product of its PKS modules and the amino group of (S,E)-2-aminodec-4-enoic acid which is activated and incorporated by the adenylation domain. The resulting aminoacyl product can be cyclized by the Diels-Alderase PoxQ and reductively released by the reductive (R) domain of poxE to yield an aldehyde intermediate. The released aldehyde is then substrate for a Knoevenagel condensation by the hydrolyase poxO followed by an oxidation at the 5-position of the pyrrolidone ring. The presence of the olefin from the amino acid building block allows for migration of the substituted allyl group to occur. This allylic transposition reaction takes place in a conjugate addition, semipinacol-like fashion to yield a succinimide intermediate. Iterative two-electron oxidations of the C7 methyl of the succinimide intermediate to the carboxylic acid can be catalyzed by one of two remaining cytochrome P450 monooxygenasess poxC or poxD to yield oxaleimide A. Subsequent oxidation yields the maleimide scaffold oxaleimide I. Both oxaleimide A and oxaleimide I can undergo oxidative modifications in the decalin ring to yield the series of products oxaleimides B to H. This Penicillium oxalicum protein is Trans-enoyl reductase poxP.